The chain runs to 166 residues: MAFVTTAEVCDANQELIRSGQLRALQPIFQIYGRRQIFSGPVVTVKVFEDNGLIRQFIEEKGNGRVLVVDGGGSQRCAILGGNPVVQAQNNGWAGIVVNGCIRDVDEINGCDIGVRALASHPIKASKKGLGEQRVPVNIAGTRICDGEWLYADTDGILVSQIELSV.

At Ala-2 the chain carries N-acetylalanine. Substrate-binding positions include 81–84 (GGNP) and Arg-103. Residue Asp-104 coordinates a divalent metal cation.

The protein belongs to the class II aldolase/RraA-like family. Homotrimer. A divalent metal cation serves as cofactor.

It carries out the reaction 4-hydroxy-4-methyl-2-oxoglutarate = 2 pyruvate. The catalysed reaction is oxaloacetate + H(+) = pyruvate + CO2. Its function is as follows. Catalyzes the aldol cleavage of 4-hydroxy-4-methyl-2-oxoglutarate (HMG) into 2 molecules of pyruvate. Also contains a secondary oxaloacetate (OAA) decarboxylase activity due to the common pyruvate enolate transition state formed following C-C bond cleavage in the retro-aldol and decarboxylation reactions. This chain is Putative 4-hydroxy-4-methyl-2-oxoglutarate aldolase 2, found in Arabidopsis thaliana (Mouse-ear cress).